Reading from the N-terminus, the 311-residue chain is Dihydroorotate dehydrogenase B (NAD(+)), catalytic subunit (311 aa).

FMN-binding positions include S24 and 48–49 (KA). Substrate contacts are provided by residues K48 and 72 to 76 (NAIGL). FMN contacts are provided by N104 and N132. N132 is a substrate binding site. Residue C135 is the Nucleophile of the active site. The FMN site is built by K170 and I196. A substrate-binding site is contributed by 197–198 (NT). Residues G222, 248-249 (GG), and 270-271 (GT) contribute to the FMN site.

This sequence belongs to the dihydroorotate dehydrogenase family. Type 1 subfamily. In terms of assembly, heterotetramer of 2 PyrK and 2 PyrD type B subunits. The cofactor is FMN.

Its subcellular location is the cytoplasm. It catalyses the reaction (S)-dihydroorotate + NAD(+) = orotate + NADH + H(+). It functions in the pathway pyrimidine metabolism; UMP biosynthesis via de novo pathway; orotate from (S)-dihydroorotate (NAD(+) route): step 1/1. Catalyzes the conversion of dihydroorotate to orotate with NAD(+) as electron acceptor. This Lactococcus lactis subsp. lactis (strain IL1403) (Streptococcus lactis) protein is Dihydroorotate dehydrogenase B (NAD(+)), catalytic subunit (pyrDB).